The sequence spans 68 residues: Large ribosomal subunit protein bL35 (68 aa).

Belongs to the bacterial ribosomal protein bL35 family.

The chain is Large ribosomal subunit protein bL35 from Rickettsia akari (strain Hartford).